A 160-amino-acid polypeptide reads, in one-letter code: Coat protein TP3 (160 aa).

Its subcellular location is the virion. This Thermoproteus tenax (TTV1) protein is Coat protein TP3.